The sequence spans 606 residues: Zinc finger protein 652 (606 aa).

Phosphoserine is present on Ser-57. A compositionally biased stretch (basic and acidic residues) spans 71 to 97 (HLHETEEQPYFRETRAVSDVHAVKEDR). Disordered regions lie at residues 71–113 (HLHE…VSYK) and 130–235 (VSKG…APVQ). A compositionally biased stretch (acidic residues) spans 98–109 (ENSDDTEEEEEE). Phosphoserine is present on Ser-100. Residue Thr-103 is modified to Phosphothreonine. A compositionally biased stretch (polar residues) spans 137–149 (VSSQSKETPVLKT). Residues 152–170 (EEEEEESEEEATDDSNDYG) show a composition bias toward acidic residues. The span at 171-183 (ENEKQKKKEKIVE) shows a compositional bias: basic and acidic residues. Residues 184–209 (KVSVTQRRTRRAASVAAATTSPTPRT) are compositionally biased toward low complexity. Ser-197 and Ser-204 each carry phosphoserine. The C2H2-type 1 zinc-finger motif lies at 245–268 (LTCEKCPRVFNTRWYLEKHMNVTH). The segment at 272–294 (QICDKCGKKFVLESELSLHQQTD) adopts a C2H2-type 2; degenerate zinc-finger fold. 6 C2H2-type zinc fingers span residues 299–322 (IQCVSCNKSFKKLWSLHEHIKIVH), 329–351 (FSCEICEKKFYTMAHVRKHMVAH), 357–379 (FTCETCGKSFKRSMSLKVHSLQH), 385–407 (FRCENCDERFQYKYQLRSHMSIH), 413–435 (FMCQWCGKDFNMKQYFDEHMKTH), and 441–463 (FICEICGKSFTSRPNMKRHRRTH). Residues 469-492 (YPCDVCGQRFRFSNMLKAHKEKCF) form a C2H2-type 9; degenerate zinc finger. The interval 498–606 (VNVPPAVQIP…AEKNSSAQHH (109 aa)) is mediates interaction with CBFA2T3.

Belongs to the krueppel C2H2-type zinc-finger protein family. Interacts with CBFA2T3. Widely expressed with higher expression in breast, prostate, vulva and pancreas.

Its subcellular location is the nucleus. Its function is as follows. Functions as a transcriptional repressor. The sequence is that of Zinc finger protein 652 (ZNF652) from Homo sapiens (Human).